We begin with the raw amino-acid sequence, 94 residues long: MLQPIGDRVIVEVKEVEEQTVGGIVLASNAKEKPTQGKVVAVGGGLYAEDGSKLPMTVQEGDEVLYDKYSGTKVKYEDKEYLVLHEKDILAIVK.

This sequence belongs to the GroES chaperonin family. In terms of assembly, heptamer of 7 subunits arranged in a ring. Interacts with the chaperonin GroEL.

Its subcellular location is the cytoplasm. In terms of biological role, together with the chaperonin GroEL, plays an essential role in assisting protein folding. The GroEL-GroES system forms a nano-cage that allows encapsulation of the non-native substrate proteins and provides a physical environment optimized to promote and accelerate protein folding. GroES binds to the apical surface of the GroEL ring, thereby capping the opening of the GroEL channel. The sequence is that of Co-chaperonin GroES from Lactobacillus delbrueckii subsp. bulgaricus (strain ATCC BAA-365 / Lb-18).